A 101-amino-acid polypeptide reads, in one-letter code: Trp operon repressor homolog (101 aa).

The DNA-binding element occupies glutamine 59–methionine 82.

This sequence belongs to the TrpR family. As to quaternary structure, homodimer.

The protein resides in the cytoplasm. Its function is as follows. This protein is an aporepressor. When complexed with L-tryptophan it binds the operator region of the trp operon and prevents the initiation of transcription. The polypeptide is Trp operon repressor homolog (Actinobacillus succinogenes (strain ATCC 55618 / DSM 22257 / CCUG 43843 / 130Z)).